The sequence spans 364 residues: Carbamoyl phosphate synthase pyrimidine-specific small chain (364 aa).

The segment at 1 to 171 is CPSase; sequence MKRRLVLENG…AYPSPGRGKR (171 aa). L-glutamine contacts are provided by Ser-45, Gly-219, and Gly-221. The region spanning 171-356 is the Glutamine amidotransferase type-1 domain; it reads RIVLVDFGMK…IEMIETTEKE (186 aa). Residue Cys-246 is the Nucleophile of the active site. Positions 247, 250, 288, 290, and 291 each coordinate L-glutamine. Active-site residues include His-329 and Glu-331.

This sequence belongs to the CarA family. As to quaternary structure, composed of two chains; the small (or glutamine) chain promotes the hydrolysis of glutamine to ammonia, which is used by the large (or ammonia) chain to synthesize carbamoyl phosphate. Tetramer of heterodimers (alpha,beta)4. Interacts with BrxC.

It catalyses the reaction hydrogencarbonate + L-glutamine + 2 ATP + H2O = carbamoyl phosphate + L-glutamate + 2 ADP + phosphate + 2 H(+). It carries out the reaction L-glutamine + H2O = L-glutamate + NH4(+). It participates in pyrimidine metabolism; UMP biosynthesis via de novo pathway; (S)-dihydroorotate from bicarbonate: step 1/3. Functionally, small subunit of the glutamine-dependent carbamoyl phosphate synthetase (CPSase). CPSase catalyzes the formation of carbamoyl phosphate from the ammonia moiety of glutamine, carbonate, and phosphate donated by ATP, constituting the first step of the biosynthetic pathway leading to arginine and/or urea. The small subunit (glutamine amidotransferase) binds and cleaves glutamine to supply the large subunit with the substrate ammonia. This Bacillus subtilis (strain 168) protein is Carbamoyl phosphate synthase pyrimidine-specific small chain.